Here is a 316-residue protein sequence, read N- to C-terminus: tRNA dimethylallyltransferase (316 aa).

Position 17–24 (17–24 (GPTASGKT)) interacts with ATP. Position 19 to 24 (19 to 24 (TASGKT)) interacts with substrate. 3 interaction with substrate tRNA regions span residues 42 to 45 (DSAL), 166 to 170 (QRLSR), and 247 to 252 (RCVGYR).

This sequence belongs to the IPP transferase family. Monomer. Mg(2+) is required as a cofactor.

The enzyme catalyses adenosine(37) in tRNA + dimethylallyl diphosphate = N(6)-dimethylallyladenosine(37) in tRNA + diphosphate. Catalyzes the transfer of a dimethylallyl group onto the adenine at position 37 in tRNAs that read codons beginning with uridine, leading to the formation of N6-(dimethylallyl)adenosine (i(6)A). This is tRNA dimethylallyltransferase from Salmonella paratyphi C (strain RKS4594).